We begin with the raw amino-acid sequence, 277 residues long: 3-methyl-2-oxobutanoate hydroxymethyltransferase (277 aa).

Mg(2+)-binding residues include aspartate 43 and aspartate 82. 3-methyl-2-oxobutanoate is bound by residues 43 to 44 (DS), aspartate 82, and lysine 112. Glutamate 114 contributes to the Mg(2+) binding site. Catalysis depends on glutamate 181, which acts as the Proton acceptor.

It belongs to the PanB family. As to quaternary structure, homodecamer; pentamer of dimers. Requires Mg(2+) as cofactor.

The protein localises to the cytoplasm. It catalyses the reaction 3-methyl-2-oxobutanoate + (6R)-5,10-methylene-5,6,7,8-tetrahydrofolate + H2O = 2-dehydropantoate + (6S)-5,6,7,8-tetrahydrofolate. The protein operates within cofactor biosynthesis; (R)-pantothenate biosynthesis; (R)-pantoate from 3-methyl-2-oxobutanoate: step 1/2. Its function is as follows. Catalyzes the reversible reaction in which hydroxymethyl group from 5,10-methylenetetrahydrofolate is transferred onto alpha-ketoisovalerate to form ketopantoate. This is 3-methyl-2-oxobutanoate hydroxymethyltransferase from Bacillus licheniformis (strain ATCC 14580 / DSM 13 / JCM 2505 / CCUG 7422 / NBRC 12200 / NCIMB 9375 / NCTC 10341 / NRRL NRS-1264 / Gibson 46).